Here is a 923-residue protein sequence, read N- to C-terminus: Dynein axonemal intermediate chain 3 (923 aa).

Positions 1-35 are disordered; the sequence is MAPKPPKSPKGQKKGKKNMKQQLLVPEEEEPMNME. Residues 10-19 are compositionally biased toward basic residues; it reads KGQKKGKKNM. WD repeat units follow at residues 398–438, 480–536, 702–741, and 745–785; these read ESPD…DRIE, GHRK…PAVT, VHDG…GPLL, and CGPK…HEPA. Positions 869–889 form a coiled coil; it reads LELVKKKAKIYQKTKEQMEAE.

Interacts with ACTR2; this interaction reduces binding of the Arp2/3 complex to the VCA domain of nucleation promoting factors. Part of the multisubunit axonemal dynein complex formed at least of two heavy chains and a number of intermediate and light chains. Found in a associated with the catalytic heavy chain DNAH2, the intermediate chain DNAI4, and the light chain DYNLT1. Strongly expressed in the testes. Detected also in brain and lung tissues.

Its subcellular location is the cytoplasm. Its function is as follows. Acts as a negative regulator of cell migration, invasion, and metastasis downstream of p53/TP53, through inhibition of Arp2/3 complex-mediated actin polymerization. Via its association with the multisubunit axonemal dynein complex, is potentially involved in the regulation of cilia function. May play a role in osteogenesis of dental tissue-derived mesenchymal stem cells. The sequence is that of Dynein axonemal intermediate chain 3 (Dnai3) from Mus musculus (Mouse).